The following is a 288-amino-acid chain: Cell division protein DivIB (288 aa).

The Cytoplasmic segment spans residues 1 to 25 (MEKVIDITERVPAMKKRRRRRTNFK). The chain crosses the membrane as a helical span at residues 26-46 (FLALVTIFLFIIIILLYFQLP). The Extracellular segment spans residues 47–288 (YSDIKKIDIK…LEEQNEEEPE (242 aa)). A POTRA domain is found at 48–116 (SDIKKIDIKG…NEVQITVEEW (69 aa)). The span at 253–263 (LIKENTEKTEE) shows a compositional bias: basic and acidic residues. The disordered stretch occupies residues 253 to 288 (LIKENTEKTEEPAEETENADTEEGGQLEEQNEEEPE). A compositionally biased stretch (acidic residues) spans 264 to 288 (PAEETENADTEEGGQLEEQNEEEPE).

Belongs to the FtsQ/DivIB family. DivIB subfamily.

Its subcellular location is the cell membrane. In terms of biological role, cell division protein that may be involved in stabilizing or promoting the assembly of the division complex. This Solibacillus silvestris (strain StLB046) (Bacillus silvestris) protein is Cell division protein DivIB.